Reading from the N-terminus, the 244-residue chain is tRNA (guanine-N(7)-)-methyltransferase (244 aa).

Over residues 1-10 (MSDTPQSPAQ) the composition is skewed to polar residues. Residues 1-20 (MSDTPQSPAQDSLAEHDEAR) are disordered. Positions 74, 99, 126, and 149 each coordinate S-adenosyl-L-methionine. Asp-149 is a catalytic residue. Substrate-binding positions include Lys-153, Asp-185, and 222–225 (TKFE).

Belongs to the class I-like SAM-binding methyltransferase superfamily. TrmB family.

The enzyme catalyses guanosine(46) in tRNA + S-adenosyl-L-methionine = N(7)-methylguanosine(46) in tRNA + S-adenosyl-L-homocysteine. It participates in tRNA modification; N(7)-methylguanine-tRNA biosynthesis. Its function is as follows. Catalyzes the formation of N(7)-methylguanine at position 46 (m7G46) in tRNA. This chain is tRNA (guanine-N(7)-)-methyltransferase, found in Pseudomonas paraeruginosa (strain DSM 24068 / PA7) (Pseudomonas aeruginosa (strain PA7)).